The chain runs to 190 residues: Segregation and condensation protein B (190 aa).

This sequence belongs to the ScpB family. As to quaternary structure, homodimer. Homodimerization may be required to stabilize the binding of ScpA to the Smc head domains. Component of a cohesin-like complex composed of ScpA, ScpB and the Smc homodimer, in which ScpA and ScpB bind to the head domain of Smc. The presence of the three proteins is required for the association of the complex with DNA.

The protein resides in the cytoplasm. Participates in chromosomal partition during cell division. May act via the formation of a condensin-like complex containing Smc and ScpA that pull DNA away from mid-cell into both cell halves. The polypeptide is Segregation and condensation protein B (Bacillus cereus (strain ATCC 14579 / DSM 31 / CCUG 7414 / JCM 2152 / NBRC 15305 / NCIMB 9373 / NCTC 2599 / NRRL B-3711)).